A 236-amino-acid chain; its full sequence is Thiol:disulfide interchange protein DsbC (236 aa).

The first 20 residues, 1–20 (MKKGFMLFTLLAAFSGFAQA), serve as a signal peptide directing secretion. The Thioredoxin domain occupies 36–231 (SSDIQPAPVA…MKEFLDEHQK (196 aa)). Cystine bridges form between Cys-118-Cys-121 and Cys-161-Cys-183.

It belongs to the thioredoxin family. DsbC subfamily. Homodimer.

It localises to the periplasm. In terms of biological role, required for disulfide bond formation in some periplasmic proteins. Acts by transferring its disulfide bond to other proteins and is reduced in the process. DsbC is reoxidized by a yet uncharacterized protein. Also acts as a disulfide isomerase. The sequence is that of Thiol:disulfide interchange protein DsbC (dsbC) from Escherichia coli O157:H7.